The following is a 97-amino-acid chain: Thiosulfate sulfurtransferase/rhodanese-like domain-containing protein 3 (97 aa).

Residues 32–84 enclose the Rhodanese domain; that stretch reads YKELKNLLNSKNIMLIDVREIWEILEYQKIPESINVPLDEVGEALQMNPRDFK. N6-succinyllysine is present on Lys-84.

The chain is Thiosulfate sulfurtransferase/rhodanese-like domain-containing protein 3 (TSTD3) from Homo sapiens (Human).